We begin with the raw amino-acid sequence, 116 residues long: NADPH-dependent 7-cyano-7-deazaguanine reductase (116 aa).

Catalysis depends on cysteine 31, which acts as the Thioimide intermediate. Aspartate 38 (proton donor) is an active-site residue. Substrate contacts are provided by residues 53–55 (VEL) and 72–73 (YE).

The protein belongs to the GTP cyclohydrolase I family. QueF type 1 subfamily.

It localises to the cytoplasm. The enzyme catalyses 7-aminomethyl-7-carbaguanine + 2 NADP(+) = 7-cyano-7-deazaguanine + 2 NADPH + 3 H(+). Its pathway is tRNA modification; tRNA-queuosine biosynthesis. Catalyzes the NADPH-dependent reduction of 7-cyano-7-deazaguanine (preQ0) to 7-aminomethyl-7-deazaguanine (preQ1). This Chlorobium chlorochromatii (strain CaD3) protein is NADPH-dependent 7-cyano-7-deazaguanine reductase.